The primary structure comprises 4639 residues: Dynein heavy chain, cytoplasmic (4639 aa).

The interval 1–1856 (MGDSLENPDT…TIHMANARFF (1856 aa)) is stem. 3 coiled-coil regions span residues 530–565 (LDITKEGSEAWEAAVKRYEEKIDRVETRITAHLRDQ), 774–794 (SLIESVRTYERTLEKIEDRAS), and 1264–1368 (DDAL…ARLR). AAA regions lie at residues 1857 to 2084 (YGFE…VLIS), 2166 to 2437 (EEIR…FTRL), 2541 to 2790 (EVET…WVRG), and 2884 to 3153 (VFYE…GGRT). Residues 1895 to 1902 (GPAGTGKT), 2210 to 2217 (GPSGSGKS), 2580 to 2587 (GPPGSGKT), and 2922 to 2929 (GVSGAGKT) each bind ATP. 3 coiled-coil regions span residues 3189-3261 (GLNK…EKRK), 3382-3478 (AIAQ…WEST), and 3723-3782 (EFRL…EIET). The stalk stretch occupies residues 3189–3478 (GLNKIAETVE…NIERERWEST (290 aa)). 2 AAA regions span residues 3539 to 3768 (LSNP…DINQ) and 3989 to 4205 (AHNV…TLDT).

It belongs to the dynein heavy chain family. As to quaternary structure, consists of at least two heavy chains and a number of intermediate and light chains.

It localises to the cytoplasm. The protein resides in the cytoskeleton. Its function is as follows. Cytoplasmic dynein acts as a motor for the intracellular retrograde motility of vesicles and organelles along microtubules. Dynein has ATPase activity; the force-producing power stroke is thought to occur on release of ADP. This chain is Dynein heavy chain, cytoplasmic (Dhc64C), found in Drosophila melanogaster (Fruit fly).